Here is a 94-residue protein sequence, read N- to C-terminus: Acylphosphatase (94 aa).

The region spanning 8–94 (TVHVIVKGKV…EKRYKHFAQL (87 aa)) is the Acylphosphatase-like domain. Residues Arg23 and Asn41 contribute to the active site.

Belongs to the acylphosphatase family.

It catalyses the reaction an acyl phosphate + H2O = a carboxylate + phosphate + H(+). The polypeptide is Acylphosphatase (acyP) (Bordetella parapertussis (strain 12822 / ATCC BAA-587 / NCTC 13253)).